Here is a 641-residue protein sequence, read N- to C-terminus: SUMO-activating enzyme subunit 2-B (641 aa).

ATP is bound by residues 24–29 (GAGGIG), aspartate 48, 56–59 (NLNR), lysine 72, 95–96 (SI), and 117–122 (DNNAAR). Cysteine 158 and cysteine 161 together coordinate Zn(2+). The Glycyl thioester intermediate role is filled by cysteine 173. Positions 439 and 442 each coordinate Zn(2+). Residues 546 to 641 (GDVPEKGPQK…EEDDDIIALD (96 aa)) form a disordered region. Residues 548-561 (VPEKGPQKPPEESV) are compositionally biased toward basic and acidic residues. Positions 562–579 (KNITNGSDDGAQPSTSKA) are enriched in polar residues. Acidic residues-rich tracts occupy residues 582–594 (QDDV…DEES) and 630–641 (PVEEDDDIIALD).

Belongs to the ubiquitin-activating E1 family. In terms of assembly, heterodimer of sae1 and uba2/sae2. The heterodimer corresponds to the two domains that are encoded on a single polypeptide chain in ubiquitin-activating enzyme E1. Interacts with ube2i.

It localises to the nucleus. It participates in protein modification; protein sumoylation. Its function is as follows. The heterodimer acts as an E1 ligase for sumo1, sumo2, and sumo3. It mediates ATP-dependent activation of sumo proteins followed by formation of a thioester bond between a sumo protein and a conserved active site cysteine residue on uba2/sae2. The protein is SUMO-activating enzyme subunit 2-B (uba2-b) of Xenopus laevis (African clawed frog).